A 586-amino-acid chain; its full sequence is Protein BONZAI 2 (586 aa).

A lipid anchor (N-myristoyl glycine) is attached at Gly2. C2 domains follow at residues 25-164 (SAAT…ALEL) and 176-303 (PQHN…NLAL). 4 residues coordinate Ca(2+): Asp62, Asp68, Asp121, and Asp123. Positions 344-563 (NFMVAIDFTA…SVVEALLAEL (220 aa)) constitute a VWFA domain.

The protein belongs to the copine family. As to quaternary structure, interacts with BAP1 and BAP2. Ca(2+) serves as cofactor. Expressed in roots, leaves and stems. Expressed in young growing tissues.

The protein localises to the cell membrane. Functionally, negative regulator of cell death and defense responses. May repress a number of R genes and may have effects in promoting growth and development. May function in membrane trafficking and in fusion of vesicles with plasma membrane. This is Protein BONZAI 2 (BON2) from Arabidopsis thaliana (Mouse-ear cress).